Reading from the N-terminus, the 401-residue chain is CCA-adding enzyme (401 aa).

Residues glycine 32 and arginine 35 each contribute to the ATP site. Glycine 32 and arginine 35 together coordinate CTP. Positions 45 and 47 each coordinate Mg(2+). Arginine 116, aspartate 159, arginine 162, arginine 165, and arginine 168 together coordinate ATP. CTP contacts are provided by arginine 116, aspartate 159, arginine 162, arginine 165, and arginine 168.

It belongs to the tRNA nucleotidyltransferase/poly(A) polymerase family. Bacterial CCA-adding enzyme type 3 subfamily. In terms of assembly, homodimer. The cofactor is Mg(2+).

The catalysed reaction is a tRNA precursor + 2 CTP + ATP = a tRNA with a 3' CCA end + 3 diphosphate. It carries out the reaction a tRNA with a 3' CCA end + 2 CTP + ATP = a tRNA with a 3' CCACCA end + 3 diphosphate. Catalyzes the addition and repair of the essential 3'-terminal CCA sequence in tRNAs without using a nucleic acid template. Adds these three nucleotides in the order of C, C, and A to the tRNA nucleotide-73, using CTP and ATP as substrates and producing inorganic pyrophosphate. tRNA 3'-terminal CCA addition is required both for tRNA processing and repair. Also involved in tRNA surveillance by mediating tandem CCA addition to generate a CCACCA at the 3' terminus of unstable tRNAs. While stable tRNAs receive only 3'-terminal CCA, unstable tRNAs are marked with CCACCA and rapidly degraded. This chain is CCA-adding enzyme, found in Streptococcus mutans serotype c (strain ATCC 700610 / UA159).